A 277-amino-acid polypeptide reads, in one-letter code: Orotidine 5'-phosphate decarboxylase (277 aa).

Substrate contacts are provided by residues D40, 62-64 (KTH), 93-102 (DRKFIDIGNT), Y229, and R247. The Proton donor role is filled by K95.

Belongs to the OMP decarboxylase family.

It catalyses the reaction orotidine 5'-phosphate + H(+) = UMP + CO2. The protein operates within pyrimidine metabolism; UMP biosynthesis via de novo pathway; UMP from orotate: step 2/2. This is Orotidine 5'-phosphate decarboxylase (pyrG) from Aspergillus kawachii (White koji mold).